The sequence spans 491 residues: Monothiol glutaredoxin-S11 (491 aa).

Glutaredoxin domains are found at residues N151 to L253, K287 to A389, and E394 to E491. K411 lines the glutathione pocket. C419 serves as a coordination point for [2Fe-2S] cluster. Glutathione contacts are provided by residues R448, F460, and C473–D474.

Belongs to the glutaredoxin family. CGFS subfamily.

It localises to the cytoplasm. Functionally, may only reduce GSH-thiol disulfides, but not protein disulfides. This is Monothiol glutaredoxin-S11 (GRXS11) from Oryza sativa subsp. japonica (Rice).